A 455-amino-acid chain; its full sequence is uncharacterized protein (455 aa).

The next 11 helical transmembrane spans lie at 26–46 (FGPGVVALGIIAAVTLLQLLI), 53–73 (GAWGAIASMWLGVHLVPISIG), 77–97 (LGVMPLLPVLLMVWATARSTA), 111–131 (WVVASALGGPLLMAAIALAVI), 146–166 (ALRAFTSVLVVHSVGAATGVW), 191–211 (AAGVLALLGLSGVVTAGSLVV), 232–252 (LTVLSVLYAPNVIVGTSAIAV), 256–276 (AHIGFATFSSFAVLGGDIPAL), 278–298 (ILAAAPTPPLGPAWVALLIVG), 323–343 (LLVAAVAGALVMAVLGYGGGG), and 357–377 (ALVLGVLFWFTFVGWVTVVIA). Positions 384 to 455 (PKRLRPAPPV…LSDEPPPRAD (72 aa)) are disordered.

It localises to the cell membrane. This is an uncharacterized protein from Mycobacterium tuberculosis (strain CDC 1551 / Oshkosh).